The sequence spans 455 residues: EP1-like glycoprotein 2 (455 aa).

Positions 1-22 are cleaved as a signal peptide; the sequence is MSRFAILVTLALAIATVSVVIA. Residues 44 to 163 form the Bulb-type lectin domain; that stretch reads EYDASYRFIE…NGKFVWQSFD (120 aa). Residues asparagine 56, asparagine 106, asparagine 191, asparagine 211, asparagine 241, and asparagine 289 are each glycosylated (N-linked (GlcNAc...) asparagine). Cysteine 374 is subject to S-nitrosocysteine. In terms of domain architecture, PAN spans 374-455; the sequence is CSGVKGKTVN…NTSSVAYIKY (82 aa). Cystine bridges form between cysteine 410/cysteine 432 and cysteine 414/cysteine 420. N-linked (GlcNAc...) asparagine glycosylation is present at asparagine 446.

It is found in the secreted. The protein localises to the cell wall. The protein is EP1-like glycoprotein 2 of Arabidopsis thaliana (Mouse-ear cress).